The sequence spans 377 residues: E3 ubiquitin-protein ligase rififylin (377 aa).

The FYVE-type zinc-finger motif lies at 55–107 (TGSEPSCKACGVHFASTTRKQTCLDCKKNFCMTCSSQEGNGPRLCLLCLRFRA). The 20-residue stretch at 115–134 (LMKMKVKDLRDYLSLHDIST) folds into the SAP 1 domain. Residues 176 to 249 (LTQPQTSTVP…SVDSEDSFVP (74 aa)) form a disordered region. The segment covering 190–212 (GLPSSPAQVTSVPLAQDQETQQA) has biased composition (polar residues). A compositionally biased stretch (acidic residues) spans 235-245 (EDETQSVDSED). Residues S240, S243, S246, and S254 each carry the phosphoserine modification. The region spanning 264–278 (IEGLTVRQLKEILAR) is the SAP 2 domain. The segment at 330-365 (CKICMDSPIDCVLLECGHMVTCTKCGKRMNECPICR) adopts an RING-type zinc-finger fold.

As to quaternary structure, interacts with CASP8 and CASP10. Interacts with RIPK1 (via protein kinase domain); involved in RIPK1 ubiquitination. Interacts with PRR5L. Interacts (via RING-type zinc finger) with p53/TP53; involved in p53/TP53 ubiquitination. Interacts (via RING-type zinc finger) with MDM2; the interaction stabilizes MDM2. In terms of processing, autoubiquitinated. Palmitoylated. Post-translationally, undergoes caspase-mediated cleavage upon death-receptor activation, by TNFSF10 for instance. May be mediated by the caspases CASP8 and CASP10 in a negative feedback loop. In terms of tissue distribution, ubiquitous. Detected in heart, brain, spleen, lung, liver, skeletal muscle, kidney, testis, thymus, whole embryo and embryonic stem cells.

It localises to the cytoplasm. Its subcellular location is the cytosol. The protein localises to the cell membrane. It is found in the recycling endosome membrane. It carries out the reaction S-ubiquitinyl-[E2 ubiquitin-conjugating enzyme]-L-cysteine + [acceptor protein]-L-lysine = [E2 ubiquitin-conjugating enzyme]-L-cysteine + N(6)-ubiquitinyl-[acceptor protein]-L-lysine.. The protein operates within protein modification; protein ubiquitination. E3 ubiquitin-protein ligase that regulates several biological processes through the ubiquitin-mediated proteasomal degradation of various target proteins. Mediates 'Lys-48'-linked polyubiquitination of PRR5L and its subsequent proteasomal degradation thereby indirectly regulating cell migration through the mTORC2 complex. Also ubiquitinates the caspases CASP8 and CASP10, promoting their proteasomal degradation, to negatively regulate apoptosis downstream of death domain receptors. Also negatively regulates the tumor necrosis factor-mediated signaling pathway through targeting of RIPK1 to ubiquitin-mediated proteasomal degradation. Negatively regulates p53/TP53 through its direct ubiquitination and targeting to proteasomal degradation. Indirectly, may also negatively regulate p53/TP53 through ubiquitination and degradation of SFN. May also play a role in endocytic recycling. The sequence is that of E3 ubiquitin-protein ligase rififylin from Mus musculus (Mouse).